A 384-amino-acid polypeptide reads, in one-letter code: Formate dehydrogenase, chloroplastic/mitochondrial (384 aa).

A chloroplast and mitochondrion-targeting transit peptide spans 1–29 (MAMRQAAKATIRACSSSSSSGYFARRQFN). Residues I128 and N152 each contribute to the substrate site. Residues 207 to 208 (RI), D227, 262 to 266 (PLTEK), N288, D314, and 338 to 341 (HTSG) each bind NAD(+).

The protein belongs to the D-isomer specific 2-hydroxyacid dehydrogenase family. FDH subfamily. In terms of assembly, homodimer.

The protein resides in the mitochondrion. Its subcellular location is the plastid. It localises to the chloroplast. The enzyme catalyses formate + NAD(+) = CO2 + NADH. Catalyzes the NAD(+)-dependent oxidation of formate to carbon dioxide. Involved in the cell stress response. The chain is Formate dehydrogenase, chloroplastic/mitochondrial (FDH1) from Arabidopsis thaliana (Mouse-ear cress).